Reading from the N-terminus, the 124-residue chain is LOB domain-containing protein 9 (124 aa).

The LOB domain maps to 11 to 113 (APCALCTTKN…IYLNELKEKI (103 aa)).

This sequence belongs to the LOB domain-containing protein family.

This Arabidopsis thaliana (Mouse-ear cress) protein is LOB domain-containing protein 9 (LBD9).